The sequence spans 331 residues: Type 2 lactosamine alpha-2,3-sialyltransferase (331 aa).

Topologically, residues 1 to 4 (MRGY) are cytoplasmic. A helical; Signal-anchor for type II membrane protein membrane pass occupies residues 5-25 (LVAIFLSAVFLYYVLHCILWG). At 26–331 (TNVYWVAPVE…KNLVINLTQD (306 aa)) the chain is on the lumenal side. Residues asparagine 129, asparagine 181, asparagine 282, asparagine 295, asparagine 308, and asparagine 327 are each glycosylated (N-linked (GlcNAc...) asparagine).

Belongs to the glycosyltransferase 29 family. In terms of tissue distribution, ubiquitous.

Its subcellular location is the golgi apparatus membrane. The enzyme catalyses a neolactoside nLc4Cer(d18:1(4E)) + CMP-N-acetyl-beta-neuraminate = a neolactoside IV(3)-alpha-NeuAc-nLc4Cer(d18:1(4E)) + CMP + H(+). It catalyses the reaction a beta-D-galactosyl-(1-&gt;4)-N-acetyl-beta-D-glucosaminyl derivative + CMP-N-acetyl-beta-neuraminate = an N-acetyl-alpha-neuraminyl-(2-&gt;3)-beta-D-galactosyl-(1-&gt;4)-N-acetyl-beta-D-glucosaminyl derivative + CMP + H(+). The catalysed reaction is a neolactoside nLc6Cer(d18:1(4E)) + CMP-N-acetyl-beta-neuraminate = a neolactoside VI(3)-alpha-NeuNAc-nLc6Cer(d18:1(4E)) + CMP + H(+). Its function is as follows. Transfers the sialyl residue from CMP-N-acetyl-beta-neuraminate to the terminal galactose residue on sugar chains of glycoproteins and glycolipids. It's alpha-2,3-sialyltransferase activity is specific toward type II glycan chains (Galbeta1-4GlcNAc) on glycoproteins and glycolipids such as neolactosides nLc4Cer and nLc6Cer, whose sialyl-products serve as precursors for the Lewis X antigen. Critically involved in the synthesis of functional selectin ligands needed for neutrophil recruitment during inflammation and lymphocyte homing to the lymph nodes. This Homo sapiens (Human) protein is Type 2 lactosamine alpha-2,3-sialyltransferase (ST3GAL6).